Reading from the N-terminus, the 504-residue chain is Maturase K (504 aa).

Belongs to the intron maturase 2 family. MatK subfamily.

The protein localises to the plastid. It localises to the chloroplast. Its function is as follows. Usually encoded in the trnK tRNA gene intron. Probably assists in splicing its own and other chloroplast group II introns. This chain is Maturase K, found in Eichhornia crassipes (Water hyacinth).